Reading from the N-terminus, the 190-residue chain is Segregation and condensation protein B (190 aa).

Belongs to the ScpB family. Homodimer. Homodimerization may be required to stabilize the binding of ScpA to the Smc head domains. Component of a cohesin-like complex composed of ScpA, ScpB and the Smc homodimer, in which ScpA and ScpB bind to the head domain of Smc. The presence of the three proteins is required for the association of the complex with DNA.

The protein localises to the cytoplasm. Participates in chromosomal partition during cell division. May act via the formation of a condensin-like complex containing Smc and ScpA that pull DNA away from mid-cell into both cell halves. In Bacillus thuringiensis subsp. konkukian (strain 97-27), this protein is Segregation and condensation protein B.